Consider the following 271-residue polypeptide: Shikimate dehydrogenase (NADP(+)) (271 aa).

Shikimate is bound by residues 15 to 17 and Thr-62; that span reads SKS. Residue Lys-66 is the Proton acceptor of the active site. Glu-78 serves as a coordination point for NADP(+). Residues Asn-87 and Asp-103 each coordinate shikimate. Residues 127 to 131, 151 to 156, and Met-214 each bind NADP(+); these read GAGGA and NRTQAK. Tyr-216 is a binding site for shikimate. Gly-238 lines the NADP(+) pocket.

Belongs to the shikimate dehydrogenase family. As to quaternary structure, homodimer.

The enzyme catalyses shikimate + NADP(+) = 3-dehydroshikimate + NADPH + H(+). The protein operates within metabolic intermediate biosynthesis; chorismate biosynthesis; chorismate from D-erythrose 4-phosphate and phosphoenolpyruvate: step 4/7. Its function is as follows. Involved in the biosynthesis of the chorismate, which leads to the biosynthesis of aromatic amino acids. Catalyzes the reversible NADPH linked reduction of 3-dehydroshikimate (DHSA) to yield shikimate (SA). The chain is Shikimate dehydrogenase (NADP(+)) from Shewanella pealeana (strain ATCC 700345 / ANG-SQ1).